The sequence spans 294 residues: 1D-myo-inositol 2-acetamido-2-deoxy-alpha-D-glucopyranoside deacetylase (294 aa).

Zn(2+) is bound by residues His15, Asp18, and His150.

The protein belongs to the MshB deacetylase family. Requires Zn(2+) as cofactor.

The catalysed reaction is 1D-myo-inositol 2-acetamido-2-deoxy-alpha-D-glucopyranoside + H2O = 1D-myo-inositol 2-amino-2-deoxy-alpha-D-glucopyranoside + acetate. Functionally, catalyzes the deacetylation of 1D-myo-inositol 2-acetamido-2-deoxy-alpha-D-glucopyranoside (GlcNAc-Ins) in the mycothiol biosynthesis pathway. This Streptomyces avermitilis (strain ATCC 31267 / DSM 46492 / JCM 5070 / NBRC 14893 / NCIMB 12804 / NRRL 8165 / MA-4680) protein is 1D-myo-inositol 2-acetamido-2-deoxy-alpha-D-glucopyranoside deacetylase.